A 376-amino-acid polypeptide reads, in one-letter code: Putative endoglucanase type K (376 aa).

Positions 1–18 (MRSYTLLALAGPLAVSAA) are cleaved as a signal peptide. The segment at 19 to 308 (SGSGHSTRYW…ATKPAQPVNK (290 aa)) is catalytic. Aspartate 29 (nucleophile) is an active-site residue. Aspartate 140 functions as the Proton donor in the catalytic mechanism. The interval 229-332 (AFKGDTSASK…SCPAKTDATA (104 aa)) is disordered. Composition is skewed to low complexity over residues 235–258 (SASK…AQPQ) and 291–306 (KPVA…AQPV). The tract at residues 309–338 (PKTTQKVRGTKTRGSCPAKTDATAKASVVP) is linker. Residues 335 to 374 (SVVPAYYQCGGSKSAYPNGNLACATGSKCVKQNEYYSQCV) enclose the CBM1 domain.

It belongs to the glycosyl hydrolase 45 (cellulase K) family.

The catalysed reaction is Endohydrolysis of (1-&gt;4)-beta-D-glucosidic linkages in cellulose, lichenin and cereal beta-D-glucans.. The chain is Putative endoglucanase type K from Fusarium oxysporum (Fusarium vascular wilt).